The sequence spans 103 residues: Putative defensin-like protein 305 (103 aa).

The N-terminal stretch at 1–31 (MREEILEIFLLVNFVFILCTSIMVRIRYVSC) is a signal peptide. 3 disulfide bridges follow: Cys31–Cys51, Cys37–Cys56, and Cys42–Cys58.

Belongs to the DEFL family.

It is found in the secreted. This Arabidopsis thaliana (Mouse-ear cress) protein is Putative defensin-like protein 305.